The chain runs to 137 residues: 1,4-dihydroxy-2-naphthoyl-CoA hydrolase (137 aa).

Residue Asp-13 is part of the active site.

The protein belongs to the 4-hydroxybenzoyl-CoA thioesterase family. DHNA-CoA hydrolase subfamily.

It catalyses the reaction 1,4-dihydroxy-2-naphthoyl-CoA + H2O = 1,4-dihydroxy-2-naphthoate + CoA + H(+). It participates in cofactor biosynthesis; phylloquinone biosynthesis. The protein operates within quinol/quinone metabolism; 1,4-dihydroxy-2-naphthoate biosynthesis; 1,4-dihydroxy-2-naphthoate from chorismate: step 7/7. Its function is as follows. Catalyzes the hydrolysis of 1,4-dihydroxy-2-naphthoyl-CoA (DHNA-CoA) to 1,4-dihydroxy-2-naphthoate (DHNA), a reaction involved in phylloquinone (vitamin K1) biosynthesis. The protein is 1,4-dihydroxy-2-naphthoyl-CoA hydrolase of Crocosphaera subtropica (strain ATCC 51142 / BH68) (Cyanothece sp. (strain ATCC 51142)).